The sequence spans 228 residues: VIGGDECNINEHRFLVALYDGLSGTFLCGGTLINQEWVLTAQHCNRSLMNIYLGMHNKNVKFDDEQRRYPKKKYFFRCNKNFTKWDEDIRLNRPVRFSAHIEPLSLPSNPPSEDSVCRVMGWGQITSPPETLPDVPHCANINLFNYTVCRGAYPRMPTKVLCAGVLEGGIDTCNRDSGGPLICNGQFQGIVFWGPDPCAQPDKPGVYTKVFDYLDWIQSVIAGNTTCS.

The Peptidase S1 domain occupies Val-1–Ala-222. 6 disulfide bridges follow: Cys-7-Cys-138, Cys-28-Cys-44, Cys-78-Cys-227, Cys-117-Cys-183, Cys-149-Cys-162, and Cys-173-Cys-198. The active-site Charge relay system is His-43. 2 N-linked (GlcNAc...) asparagine glycosylation sites follow: Asn-45 and Asn-81. Residue Asp-88 is the Charge relay system of the active site. Asn-145 is a glycosylation site (N-linked (GlcNAc...) asparagine). Residue Ser-177 is the Charge relay system of the active site. Residue Asn-224 is glycosylated (N-linked (GlcNAc...) asparagine).

This sequence belongs to the peptidase S1 family. Snake venom subfamily. As to quaternary structure, monomer. As to expression, expressed by the venom gland.

It is found in the secreted. It catalyses the reaction Selective cleavage of Arg-|-Xaa bond in fibrinogen, to form fibrin, and release fibrinopeptide A. The specificity of further degradation of fibrinogen varies with species origin of the enzyme.. Its activity is regulated as follows. Inhibited competitively by amidines and guanidines, and irreversibly inhibited by diisopropylfluorophosphate. Its function is as follows. Thrombin-like snake venom serine protease, that cleaves alpha-chain of fibrinogen (FGA) releases only fibrinopeptide A. Shows coagulant, esterase and amidase activities. Induces the barrel rotation syndrome in mice, which is manifested by gyroxin-like, rapid rolling motions. May also reversibly increase the permeability of the blood brain barrier (BBB) in mice. The protein is Thrombin-like enzyme gyroxin analog of Lachesis muta muta (Bushmaster).